A 77-amino-acid polypeptide reads, in one-letter code: Protein NS4 (77 aa).

The protein localises to the host cytoplasm. Its subcellular location is the host nucleus. The protein resides in the host nucleolus. In terms of biological role, may function as a nucleic acid binding protein that modulates transcription of genes participating in the IFN response. The chain is Protein NS4 (Segment-9) from Antilocapra americana (Pronghorn).